Reading from the N-terminus, the 952-residue chain is Respiratory burst oxidase homolog protein E (952 aa).

The Cytoplasmic portion of the chain corresponds to 1–392 (MKLSPLSFST…QCLILDNWQR (392 aa)). 2 EF-hand-like regions span residues 211-219 (SKNGLLARD) and 245-256 (RRQKLEKITKDE). EF-hand domains are found at residues 268-303 (SFDARLQIFFDMADSNEDGKITREEIKELLMLSASA) and 312-347 (QAEEYASLIMEELDPENFGYIELWQLETLLLQRDAY). 5 residues coordinate Ca(2+): D281, N283, D285, K287, and E292. The chain crosses the membrane as a helical span at residues 393-413 (SWVLLVWVMLMAILFVWKFLE). Over 414-475 (YREKAAFKVM…PFDDNINFHK (62 aa)) the chain is Extracellular. The 157-residue stretch at 431–587 (KGAAETLKLN…LLVVVYIMLI (157 aa)) folds into the Ferric oxidoreductase domain. Residues 476 to 496 (IIACAIAIGILVHAGTHLACD) form a helical membrane-spanning segment. Residues 497-531 (FPRIINSSPEQFVLIASAFNGTKPTFKDLMTGAEG) are Cytoplasmic-facing. Residues 532-552 (ITGISMVILTTIAFTLASTHF) traverse the membrane as a helical segment. The Extracellular portion of the chain corresponds to 553 to 574 (RRNRVRLPAPLDRLTGFNAFWY). The chain crosses the membrane as a helical span at residues 575-595 (THHLLVVVYIMLIVHGTFLFF). The Cytoplasmic segment spans residues 596–603 (ADKWYQKT). A helical membrane pass occupies residues 604–621 (TWMYISVPLVLYVAERSL). The Extracellular portion of the chain corresponds to 622–750 (RACRSKHYSV…PYGAPAQDYR (129 aa)). In terms of domain architecture, FAD-binding FR-type spans 626–748 (SKHYSVKILK…DGPYGAPAQD (123 aa)). Residues 751-771 (SYDVLLLIGLGIGATPFISIL) form a helical membrane-spanning segment. The Cytoplasmic segment spans residues 772–952 (KDLLNNSRDE…TRFEFHKEHF (181 aa)).

It belongs to the RBOH (TC 5.B.1.3) family. Monomer and homodimer. As to expression, expressed in roots, inflorescences, leaves and stems.

The protein resides in the membrane. In terms of biological role, calcium-dependent NADPH oxidase that generates superoxide. The sequence is that of Respiratory burst oxidase homolog protein E (RBOHE) from Arabidopsis thaliana (Mouse-ear cress).